We begin with the raw amino-acid sequence, 349 residues long: Protein RecA (349 aa).

65–72 (GPESSGKT) serves as a coordination point for ATP.

The protein belongs to the RecA family.

It localises to the cytoplasm. Can catalyze the hydrolysis of ATP in the presence of single-stranded DNA, the ATP-dependent uptake of single-stranded DNA by duplex DNA, and the ATP-dependent hybridization of homologous single-stranded DNAs. It interacts with LexA causing its activation and leading to its autocatalytic cleavage. In Azotobacter vinelandii, this protein is Protein RecA.